A 352-amino-acid polypeptide reads, in one-letter code: MHQMISIFLFLTVVSGTIIVVSAENWFVIWLGLELSTLALIPILWFCFTPRNIEATIKYFLVQAFSAALLLNSALIQAWFSGSWSALIPMESFPSLCLSVALAFNLGLAACHFWLPDVLQGLPFIQGLIIATWQKIAPLFLLFYFNQLNFSYFIILAALISILVGGWGGLNQTQTRKILAFSSIGNMGWIVVTSAFSLGTAAMMLFIYLVINTSIFLILDFLSIFTLGHLNNTSQLSPISITLVILTILSLGGLPPLTGFILKFSSLYSLINNGFIFFSSVMIIGSLLSLFFYLRIAFNTTLILFPQHLISLTAWRNSTEAEPLMAKTWLVSSFSVLSILAIPLTIPLYINV.

The next 11 membrane-spanning stretches (helical) occupy residues 4-24, 26-46, 60-80, 96-116, 124-144, 150-170, 178-198, 205-225, 241-261, 274-294, and 330-350; these read MISI…VSAE, WFVI…ILWF, FLVQ…QAWF, LCLS…FWLP, FIQG…LLFY, FSYF…WGGL, ILAF…AFSL, LFIY…LSIF, ITLV…TGFI, GFIF…FFYL, and LVSS…PLYI.

This sequence belongs to the complex I subunit 2 family.

The protein resides in the mitochondrion inner membrane. It carries out the reaction a ubiquinone + NADH + 5 H(+)(in) = a ubiquinol + NAD(+) + 4 H(+)(out). Its function is as follows. Core subunit of the mitochondrial membrane respiratory chain NADH dehydrogenase (Complex I) that is believed to belong to the minimal assembly required for catalysis. Complex I functions in the transfer of electrons from NADH to the respiratory chain. The immediate electron acceptor for the enzyme is believed to be ubiquinone. This Paracentrotus lividus (Common sea urchin) protein is NADH-ubiquinone oxidoreductase chain 2 (ND2).